Consider the following 224-residue polypeptide: Retinoschisin (224 aa).

Positions Met1–Ser23 are cleaved as a signal peptide. Residues Cys63–Cys219 enclose the F5/8 type C domain. Cystine bridges form between Cys63–Cys219 and Cys110–Cys142.

Homooctamer of 4 homodimers; disulfide-linked. The homooctamer has a flat, cogwheel structure with a diameter of about 14 nm. Two stacked octamers can assemble to form a hexadecamer. In terms of tissue distribution, restricted to the retina (at protein level). Detected in the inner segment of the photoreceptors, the inner nuclear layer, the inner plexiform layer and the ganglion cell layer (at protein level). At the macula, expressed in both the outer and inner nuclear layers and in the inner plexiform layer (at protein level). Detected in retina. Detected only within the photoreceptor cell layer, most prominently within the inner segments of the photoreceptors. Undetectable in the inner plexiform layers and the inner nuclear layer.

The protein localises to the secreted. Its subcellular location is the cell membrane. Binds negatively charged membrane lipids, such as phosphatidylserine and phosphoinositides. May play a role in cell-cell adhesion processes in the retina, via homomeric interaction between octamers present on the surface of two neighboring cells. Required for normal structure and function of the retina. In Homo sapiens (Human), this protein is Retinoschisin (RS1).